A 219-amino-acid polypeptide reads, in one-letter code: Chalcone--flavanone isomerase (219 aa).

Substrate-binding residues include Thr-50, Asn-115, and Ser-192.

Belongs to the chalcone isomerase family.

It carries out the reaction a chalcone = a flavanone.. Its pathway is secondary metabolite biosynthesis; flavonoid biosynthesis. Its function is as follows. Catalyzes the intramolecular cyclization of bicyclic chalcones into tricyclic (S)-flavanones. Responsible for the isomerization of 4,2',4',6'-tetrahydroxychalcone (also termed chalcone) into naringenin. The protein is Chalcone--flavanone isomerase (CHI) of Pyrus communis (Pear).